The sequence spans 1196 residues: DNA-directed RNA polymerase subunit 2 (1196 aa).

Residues Ser-1074–Gly-1095 are disordered. The C4-type zinc-finger motif lies at Cys-1133–Cys-1154.

It belongs to the RNA polymerase beta chain family.

The protein resides in the virion. The enzyme catalyses RNA(n) + a ribonucleoside 5'-triphosphate = RNA(n+1) + diphosphate. In terms of biological role, DNA-dependent RNA polymerase catalyzes the transcription of DNA into RNA using the four ribonucleoside triphosphates as substrates. In Acanthamoeba polyphaga mimivirus (APMV), this protein is DNA-directed RNA polymerase subunit 2 (RPO2).